A 276-amino-acid polypeptide reads, in one-letter code: Glutamate racemase (276 aa).

Substrate contacts are provided by residues 12-13 and 44-45; these read DS and YG. Cysteine 76 serves as the catalytic Proton donor/acceptor. Residue 77–78 participates in substrate binding; the sequence is NT. Cysteine 187 (proton donor/acceptor) is an active-site residue. 188-189 lines the substrate pocket; it reads TH.

The protein belongs to the aspartate/glutamate racemases family.

It carries out the reaction L-glutamate = D-glutamate. The protein operates within cell wall biogenesis; peptidoglycan biosynthesis. Functionally, provides the (R)-glutamate required for cell wall biosynthesis. The polypeptide is Glutamate racemase (Granulibacter bethesdensis (strain ATCC BAA-1260 / CGDNIH1)).